We begin with the raw amino-acid sequence, 339 residues long: Methylthioribose-1-phosphate isomerase (339 aa).

Substrate-binding positions include 52-54 (RGA), Arg89, and Gln188. The Proton donor role is filled by Asp229. A substrate-binding site is contributed by 239-240 (NK).

The protein belongs to the eIF-2B alpha/beta/delta subunits family. MtnA subfamily.

It carries out the reaction 5-(methylsulfanyl)-alpha-D-ribose 1-phosphate = 5-(methylsulfanyl)-D-ribulose 1-phosphate. The protein operates within amino-acid biosynthesis; L-methionine biosynthesis via salvage pathway; L-methionine from S-methyl-5-thio-alpha-D-ribose 1-phosphate: step 1/6. Catalyzes the interconversion of methylthioribose-1-phosphate (MTR-1-P) into methylthioribulose-1-phosphate (MTRu-1-P). The protein is Methylthioribose-1-phosphate isomerase of Anaeromyxobacter sp. (strain K).